A 295-amino-acid polypeptide reads, in one-letter code: Bifunctional protein FolD (295 aa).

NADP(+)-binding positions include 172-174 (GRS), Ser197, and Ile238.

This sequence belongs to the tetrahydrofolate dehydrogenase/cyclohydrolase family. Homodimer.

The catalysed reaction is (6R)-5,10-methylene-5,6,7,8-tetrahydrofolate + NADP(+) = (6R)-5,10-methenyltetrahydrofolate + NADPH. It carries out the reaction (6R)-5,10-methenyltetrahydrofolate + H2O = (6R)-10-formyltetrahydrofolate + H(+). The protein operates within one-carbon metabolism; tetrahydrofolate interconversion. In terms of biological role, catalyzes the oxidation of 5,10-methylenetetrahydrofolate to 5,10-methenyltetrahydrofolate and then the hydrolysis of 5,10-methenyltetrahydrofolate to 10-formyltetrahydrofolate. This is Bifunctional protein FolD from Rickettsia akari (strain Hartford).